We begin with the raw amino-acid sequence, 466 residues long: Citrate synthase, mitochondrial (466 aa).

The transit peptide at 1–27 (MALLTAAARLFGAKNASCLVLAARHAS) directs the protein to the mitochondrion. Positions 2–21 (ALLTAAARLFGAKNASCLVL) match the SIFI-degron motif. Lys-57 bears the N6-succinyllysine mark. Lys-76 carries the post-translational modification N6-acetyllysine; alternate. Position 76 is an N6-succinyllysine; alternate (Lys-76). 2 positions are modified to N6-succinyllysine: Lys-103 and Lys-193. Position 226 is a phosphoserine (Ser-226). His-301 is a catalytic residue. N6-acetyllysine; alternate is present on residues Lys-321 and Lys-327. N6-succinyllysine; alternate is present on residues Lys-321 and Lys-327. Residue His-347 is part of the active site. Arg-356 contributes to the oxaloacetate binding site. Residue Lys-375 is modified to N6-acetyllysine; alternate. At Lys-375 the chain carries N6-succinyllysine; alternate. N6-acetyllysine is present on Lys-382. Residue Lys-393 is modified to N6-acetyllysine; alternate. At Lys-393 the chain carries N6-succinyllysine; alternate. Residue Lys-395 is modified to N6,N6,N6-trimethyllysine. Residue Asp-402 is part of the active site. 2 residues coordinate oxaloacetate: Arg-428 and Arg-448. Position 450 is an N6-succinyllysine (Lys-450). Lys-459 is subject to N6-acetyllysine; alternate. Lys-459 carries the post-translational modification N6-succinyllysine; alternate.

Belongs to the citrate synthase family. In terms of assembly, homodimer. Post-translationally, methylated. Trimethylation at Lys-395 by CSKMT decreases citrate synthase activity. In terms of processing, in response to mitochondrial stress, the precursor protein is ubiquitinated by the SIFI complex in the cytoplasm before mitochondrial import, leading to its degradation. Within the SIFI complex, UBR4 initiates ubiquitin chain that are further elongated or branched by KCMF1.

It is found in the mitochondrion matrix. The enzyme catalyses oxaloacetate + acetyl-CoA + H2O = citrate + CoA + H(+). It participates in carbohydrate metabolism; tricarboxylic acid cycle; isocitrate from oxaloacetate: step 1/2. Its function is as follows. Key enzyme of the Krebs tricarboxylic acid cycle which catalyzes the synthesis of citrate from acetyl coenzyme A and oxaloacetate. The polypeptide is Citrate synthase, mitochondrial (CS) (Bos taurus (Bovine)).